Here is a 189-residue protein sequence, read N- to C-terminus: UPF0398 protein LGAS_1023 (189 aa).

Belongs to the UPF0398 family.

This chain is UPF0398 protein LGAS_1023, found in Lactobacillus gasseri (strain ATCC 33323 / DSM 20243 / BCRC 14619 / CIP 102991 / JCM 1131 / KCTC 3163 / NCIMB 11718 / NCTC 13722 / AM63).